We begin with the raw amino-acid sequence, 160 residues long: Epithelial membrane protein 1 (160 aa).

Residues 1-21 form a helical membrane-spanning segment; it reads MLVLLAAIFVVHIATCVMLFV. N-linked (GlcNAc...) asparagine glycans are attached at residues Asn35 and Asn43. 3 consecutive transmembrane segments (helical) span residues 67 to 87, 95 to 115, and 137 to 157; these read FMIL…FQLF, FFLS…GASI, and FILA…YLVL.

The protein belongs to the PMP-22/EMP/MP20 family. As to expression, most abundant in squamous epithelia.

The protein resides in the membrane. This chain is Epithelial membrane protein 1 (EMP1), found in Oryctolagus cuniculus (Rabbit).